We begin with the raw amino-acid sequence, 401 residues long: MDWLKRWFTRKDQDKTETTSASKRAKITSSLLMFSALYEAKKPLKYTIVYILALVNAFFLLVFIQQTGLYSFGISSLTQGFARLLFVLLKNLEDGQRNLVFNIFYWLFYVIVNIPLIIFSYKKIGKRFTILSTHYVVASNVFGFIFSIIPGANQLPSMLSAVHHTEFWEDAKKAEGVDQSALFVPFLWNDTSQGNVIISTFIYAGIYGFVNGTSLAILYILGSCAGGADFLTQYFARKKNRSVGPILFYVNTFILIIAILMGSFVAGSIVLQDIPDYKKSAWQVNLFFSPNLIATFFSVLFTGTVVSHLFPRYNFAEIKVFTDKIEEVRLALLNDKATHSLSIQETMGGYSLAKKRMIVSVTMYVEIPNLIRIIRKIDKDCLVSITRIRGIDGYIYLRSQD.

Transmembrane regions (helical) follow at residues 44 to 64, 69 to 89, 99 to 119, 130 to 150, 201 to 221, 246 to 266, and 286 to 306; these read LKYT…LVFI, LYSF…FVLL, LVFN…LIIF, ILST…SIIP, FIYA…LYIL, ILFY…SFVA, and LFFS…GTVV.

The protein localises to the cell membrane. This is an uncharacterized protein from Mycoplasma pneumoniae (strain ATCC 29342 / M129 / Subtype 1) (Mycoplasmoides pneumoniae).